A 434-amino-acid chain; its full sequence is Glutamyl-tRNA reductase (434 aa).

Substrate is bound by residues 52-55 (TCNR), Ser-115, 120-122 (ETQ), and Gln-126. The active-site Nucleophile is Cys-53. 195-200 (GAGEMI) lines the NADP(+) pocket.

The protein belongs to the glutamyl-tRNA reductase family. Homodimer.

It catalyses the reaction (S)-4-amino-5-oxopentanoate + tRNA(Glu) + NADP(+) = L-glutamyl-tRNA(Glu) + NADPH + H(+). The protein operates within porphyrin-containing compound metabolism; protoporphyrin-IX biosynthesis; 5-aminolevulinate from L-glutamyl-tRNA(Glu): step 1/2. Catalyzes the NADPH-dependent reduction of glutamyl-tRNA(Glu) to glutamate 1-semialdehyde (GSA). The sequence is that of Glutamyl-tRNA reductase from Cupriavidus metallidurans (strain ATCC 43123 / DSM 2839 / NBRC 102507 / CH34) (Ralstonia metallidurans).